The sequence spans 404 residues: Methionine aminopeptidase 1D, mitochondrial (404 aa).

A mitochondrion-targeting transit peptide spans 1-58; it reads MNKILKNIINKSSINNVFKTSFNGGISSSSSSSSSYLNNNNNIIKSYNVQQKQQQRYY. Positions 86–109 are disordered; the sequence is VRSQRLTKKTASPLEGMNRKERRK. Residue His232 coordinates substrate. A divalent metal cation is bound by residues Asp249, Asp260, and His323. His330 provides a ligand contact to substrate. Glu355 and Glu389 together coordinate a divalent metal cation.

The protein belongs to the peptidase M24A family. Methionine aminopeptidase type 1 subfamily. Co(2+) serves as cofactor. The cofactor is Zn(2+). Mn(2+) is required as a cofactor. Requires Fe(2+) as cofactor.

Its subcellular location is the mitochondrion. The catalysed reaction is Release of N-terminal amino acids, preferentially methionine, from peptides and arylamides.. Removes the N-terminal methionine from nascent proteins. The N-terminal methionine is often cleaved when the second residue in the primary sequence is small and uncharged (Met-Ala-, Cys, Gly, Pro, Ser, Thr, or Val). The protein is Methionine aminopeptidase 1D, mitochondrial (metap1d) of Dictyostelium discoideum (Social amoeba).